Reading from the N-terminus, the 195-residue chain is Nucleoid occlusion factor SlmA (195 aa).

The HTH tetR-type domain maps to 6-66 (PSRRESILQA…ALIEFAEEAV (61 aa)). Residues 29–48 (TTAGLAKTVGVTEAALYRHF) constitute a DNA-binding region (H-T-H motif). Residues 118 to 138 (RKRASQFFERLETQIRQALKE) are a coiled coil.

The protein belongs to the nucleoid occlusion factor SlmA family. As to quaternary structure, homodimer. Interacts with FtsZ.

The protein localises to the cytoplasm. Its subcellular location is the nucleoid. Functionally, required for nucleoid occlusion (NO) phenomenon, which prevents Z-ring formation and cell division over the nucleoid. Acts as a DNA-associated cell division inhibitor that binds simultaneously chromosomal DNA and FtsZ, and disrupts the assembly of FtsZ polymers. SlmA-DNA-binding sequences (SBS) are dispersed on non-Ter regions of the chromosome, preventing FtsZ polymerization at these regions. This Marinobacter nauticus (strain ATCC 700491 / DSM 11845 / VT8) (Marinobacter aquaeolei) protein is Nucleoid occlusion factor SlmA.